The following is a 149-amino-acid chain: MKKITVDLNGKDLRIGIVLSRFNSNIGEGLLKACVDQLHKLGVADDDITLATVPGALEAPAILLQMADSEQFDGLIALGAVIRGETYHFEVVSNESARGISDVQLSTGIPIANAILTTENDEQAEARVAVKGAEAADVVVEMINLLKQL.

5-amino-6-(D-ribitylamino)uracil-binding positions include Phe22, 56 to 58, and 80 to 82; these read ALE and AVI. 85 to 86 serves as a coordination point for (2S)-2-hydroxy-3-oxobutyl phosphate; it reads ET. Catalysis depends on His88, which acts as the Proton donor. Asn113 serves as a coordination point for 5-amino-6-(D-ribitylamino)uracil. Arg127 contributes to the (2S)-2-hydroxy-3-oxobutyl phosphate binding site.

This sequence belongs to the DMRL synthase family.

It carries out the reaction (2S)-2-hydroxy-3-oxobutyl phosphate + 5-amino-6-(D-ribitylamino)uracil = 6,7-dimethyl-8-(1-D-ribityl)lumazine + phosphate + 2 H2O + H(+). The protein operates within cofactor biosynthesis; riboflavin biosynthesis; riboflavin from 2-hydroxy-3-oxobutyl phosphate and 5-amino-6-(D-ribitylamino)uracil: step 1/2. In terms of biological role, catalyzes the formation of 6,7-dimethyl-8-ribityllumazine by condensation of 5-amino-6-(D-ribitylamino)uracil with 3,4-dihydroxy-2-butanone 4-phosphate. This is the penultimate step in the biosynthesis of riboflavin. The chain is 6,7-dimethyl-8-ribityllumazine synthase from Methylobacillus flagellatus (strain ATCC 51484 / DSM 6875 / VKM B-1610 / KT).